The chain runs to 360 residues: Phospho-N-acetylmuramoyl-pentapeptide-transferase (360 aa).

10 helical membrane-spanning segments follow: residues 27 to 47 (IVSL…LIAW), 72 to 92 (PTMG…MWAY), 94 to 114 (SNPY…VGFI), 132 to 152 (WKYF…YSIG), 168 to 188 (IMPQ…VGTS), 199 to 219 (GLAI…AWAT), 236 to 256 (AGEL…FLWF), 263 to 283 (VFMG…IAVL), 288 to 308 (FLLV…ILQV), and 338 to 358 (VIVR…ATLK).

This sequence belongs to the glycosyltransferase 4 family. MraY subfamily. Mg(2+) serves as cofactor.

The protein localises to the cell inner membrane. The enzyme catalyses UDP-N-acetyl-alpha-D-muramoyl-L-alanyl-gamma-D-glutamyl-meso-2,6-diaminopimeloyl-D-alanyl-D-alanine + di-trans,octa-cis-undecaprenyl phosphate = di-trans,octa-cis-undecaprenyl diphospho-N-acetyl-alpha-D-muramoyl-L-alanyl-D-glutamyl-meso-2,6-diaminopimeloyl-D-alanyl-D-alanine + UMP. The protein operates within cell wall biogenesis; peptidoglycan biosynthesis. Functionally, catalyzes the initial step of the lipid cycle reactions in the biosynthesis of the cell wall peptidoglycan: transfers peptidoglycan precursor phospho-MurNAc-pentapeptide from UDP-MurNAc-pentapeptide onto the lipid carrier undecaprenyl phosphate, yielding undecaprenyl-pyrophosphoryl-MurNAc-pentapeptide, known as lipid I. This Yersinia pseudotuberculosis serotype O:1b (strain IP 31758) protein is Phospho-N-acetylmuramoyl-pentapeptide-transferase.